The sequence spans 147 residues: Sec-independent protein translocase protein TatB (147 aa).

The chain crosses the membrane as a helical span at residues 1–21 (MFDIGFWELVVIGVVALVVLG). Residues 114–147 (EPVAPISVATPDEEPTVIPAARAQPSAEQGEVKP) are disordered.

The protein belongs to the TatB family. The Tat system comprises two distinct complexes: a TatABC complex, containing multiple copies of TatA, TatB and TatC subunits, and a separate TatA complex, containing only TatA subunits. Substrates initially bind to the TatABC complex, which probably triggers association of the separate TatA complex to form the active translocon.

Its subcellular location is the cell inner membrane. Functionally, part of the twin-arginine translocation (Tat) system that transports large folded proteins containing a characteristic twin-arginine motif in their signal peptide across membranes. Together with TatC, TatB is part of a receptor directly interacting with Tat signal peptides. TatB may form an oligomeric binding site that transiently accommodates folded Tat precursor proteins before their translocation. This is Sec-independent protein translocase protein TatB from Aeromonas hydrophila subsp. hydrophila (strain ATCC 7966 / DSM 30187 / BCRC 13018 / CCUG 14551 / JCM 1027 / KCTC 2358 / NCIMB 9240 / NCTC 8049).